The following is a 266-amino-acid chain: Uxu operon regulator (266 aa).

Residues 23–91 (NRTYTRIGQL…KGSGVYVVRT (69 aa)) enclose the HTH gntR-type domain. The H-T-H motif DNA-binding region spans 51 to 70 (EREISEKFGVSRTIVREAMV).

Its function is as follows. Repressor for the uxuRBA operon. This chain is Uxu operon regulator (uxuR), found in Haemophilus influenzae (strain ATCC 51907 / DSM 11121 / KW20 / Rd).